Reading from the N-terminus, the 66-residue chain is Beta-toxin Cb1 (66 aa).

Residues 1-66 (KEGYIVNHST…VWPLPKKTCN (66 aa)) enclose the LCN-type CS-alpha/beta domain. Disulfide bonds link cysteine 12/cysteine 65, cysteine 16/cysteine 41, cysteine 25/cysteine 46, and cysteine 29/cysteine 48.

It belongs to the long (4 C-C) scorpion toxin superfamily. Sodium channel inhibitor family. Beta subfamily. As to expression, expressed by the venom gland.

The protein resides in the secreted. Inhibited by human antibodies scFvs 10FG2 and LR. Its function is as follows. Beta toxins bind voltage-independently at site-4 of sodium channels (Nav) and reduces peak current and shifts the voltage of activation toward more negative potentials thereby affecting sodium channel activation and promoting spontaneous and repetitive firing. Has an inhibitory effect on voltage-gated sodium channel hNav1.6/SCN8A, affecting both the activation and inactivation processes. This toxin is active against mammals and lethal to mice. This Centruroides baergi (Scorpion) protein is Beta-toxin Cb1.